The sequence spans 105 residues: Vitelline membrane protein Vm32E (105 aa).

Positions 1-17 are cleaved as a signal peptide; that stretch reads MHFIALIVAVCVAFAGA. Positions 25–62 constitute a VM domain; it reads GIAAPPCPKNYLFSCQPNLVPAPCAQEAASYGSAGAYA.

It belongs to the vitelline membrane family.

The protein resides in the secreted. Its function is as follows. Major early eggshell protein. The chain is Vitelline membrane protein Vm32E from Drosophila ananassae (Fruit fly).